We begin with the raw amino-acid sequence, 743 residues long: ABC-type transporter claG (743 aa).

Residues asparagine 4 and asparagine 30 are each glycosylated (N-linked (GlcNAc...) asparagine). The helical transmembrane segment at serine 124 to isoleucine 144 threads the bilayer. The N-linked (GlcNAc...) asparagine glycan is linked to asparagine 159. In terms of domain architecture, ABC transporter spans valine 200–leucine 439. ATP is bound at residue glycine 234–serine 241. A run of 5 helical transmembrane segments spans residues tyrosine 507–serine 527, glycine 560–glycine 580, isoleucine 611–serine 631, leucine 636–isoleucine 656, and asparagine 661–proline 681.

The protein belongs to the ABC transporter superfamily. ABCG family.

It localises to the membrane. In terms of biological role, ABC-type transporter; part of the cla gene cluster that produces clavatol and ortho-quinone methide. The clavatol biosynthesis cluster cla and the terrestric acid cluster tra are both involved in the production of peniphenones and penilactones. The polypeptide is ABC-type transporter claG (Penicillium crustosum (Blue mold fungus)).